A 352-amino-acid polypeptide reads, in one-letter code: C-C chemokine receptor type 5 (352 aa).

The Extracellular segment spans residues 1–30 (MDYQVSSPTYDIDYYTSEPCQKINVKQIAA). Tyr-3 bears the Sulfotyrosine mark. Ser-6 and Ser-7 each carry an O-linked (GalNAc...) serine glycan. 3 positions are modified to sulfotyrosine: Tyr-10, Tyr-14, and Tyr-15. 2 cysteine pairs are disulfide-bonded: Cys-20-Cys-269 and Cys-101-Cys-178. The helical transmembrane segment at 31–58 (RLLPPLYSLVFIFGFVGNILVVLILINC) threads the bilayer. Residues 59-68 (KRLKSMTDIY) lie on the Cytoplasmic side of the membrane. Residues 69–89 (LLNLAISDLLFLLTIPFWAHY) traverse the membrane as a helical segment. Topologically, residues 90–102 (AAAQWDFGNTMCQ) are extracellular. Residues 103–124 (LLTGLYLIGFFSGIFFIILLTI) traverse the membrane as a helical segment. The Cytoplasmic portion of the chain corresponds to 125–141 (DRYLAIVHAVFALKART). The chain crosses the membrane as a helical span at residues 142 to 166 (VTFGLVTSVITWVVAVFASLPGIIF). Residues 167-198 (TRSQREGLHYTCSSHFPSSQYQFWKNFQTLKI) are Extracellular-facing. A helical transmembrane segment spans residues 199–218 (VILGLVLPLLVMVICYSGIL). Residues 219-235 (KTLLRCRNEKKRHRAVR) lie on the Cytoplasmic side of the membrane. A helical membrane pass occupies residues 236–260 (LIFTIMIVYFLFWAPYNIVLLLNTF). Topologically, residues 261–277 (QEFFGLNNCSSSNRLDQ) are extracellular. Residues 278–301 (AMQVTETLGMTHCCINPIIYAFVG) traverse the membrane as a helical segment. Topologically, residues 302-352 (EKFRNYLLVFFQKHLAKRFCKCCSIFQQEAPERASSVYTRSTGEQETTVGL) are cytoplasmic. Residues Cys-321, Cys-323, and Cys-324 are each lipidated (S-palmitoyl cysteine). A phosphoserine; by BARK1 mark is found at Ser-336, Ser-337, and Ser-342.

This sequence belongs to the G-protein coupled receptor 1 family. Interacts with PRAF2. Efficient ligand binding to CCL3/MIP-1alpha and CCL4/MIP-1beta requires sulfation, O-glycosylation and sialic acid modifications. Glycosylation on Ser-6 is required for efficient binding of CCL4. Interacts with GRK2. Interacts with ARRB1 and ARRB2. Interacts with CNIH4. Interacts with S100A4; this interaction stimulates T-lymphocyte chemotaxis. Post-translationally, sulfated on at least 2 of the N-terminal tyrosines. Sulfation is required for efficient binding of the chemokines, CCL3 and CCL4. Palmitoylation in the C-terminal is important for cell surface expression. In terms of processing, phosphorylation on serine residues in the C-terminal is stimulated by binding CC chemokines especially by APO-RANTES. Post-translationally, O-glycosylated, but not N-glycosylated. Ser-6 appears to be the major site even if Ser-7 may be also O-glycosylated. Also sialylated glycans present which contribute to chemokine binding. Thr-16 and Ser-17 may also be glycosylated and, if so, with small moieties such as a T-antigen.

The protein resides in the cell membrane. In terms of biological role, receptor for a number of inflammatory CC-chemokines including CCL3/MIP-1-alpha, CCL4/MIP-1-beta and RANTES and subsequently transduces a signal by increasing the intracellular calcium ion level. May play a role in the control of granulocytic lineage proliferation or differentiation. Participates in T-lymphocyte migration to the infection site by acting as a chemotactic receptor. This is C-C chemokine receptor type 5 (CCR5) from Allochrocebus lhoesti (L'Hoest's monkey).